The sequence spans 265 residues: Endochitinase At2g43580 (265 aa).

Positions 1–24 (MALTKIFLILLLSLLGLYSETVKS) are cleaved as a signal peptide. A Chitin-binding type-1 domain is found at 25 to 59 (QNCDCAPNLCCSQFGYCGTTADYCGSTCQSGPCRV). 4 cysteine pairs are disulfide-bonded: cysteine 27–cysteine 35, cysteine 29–cysteine 41, cysteine 34–cysteine 48, and cysteine 52–cysteine 57. The tract at residues 67 to 265 (GLVGNIVTQI…GLDPGANITC (199 aa)) is catalytic. Residue asparagine 102 is glycosylated (N-linked (GlcNAc...) asparagine). Catalysis depends on glutamate 129, which acts as the Proton donor. N-linked (GlcNAc...) asparagine glycosylation is present at asparagine 262.

This sequence belongs to the glycosyl hydrolase 19 family. Chitinase class I subfamily.

It catalyses the reaction Random endo-hydrolysis of N-acetyl-beta-D-glucosaminide (1-&gt;4)-beta-linkages in chitin and chitodextrins.. The polypeptide is Endochitinase At2g43580 (Arabidopsis thaliana (Mouse-ear cress)).